Consider the following 154-residue polypeptide: Transcriptional repressor NrdR (154 aa).

A zinc finger lies at 3 to 34 (CPFCGHSNTQVLDTRMSEDGDAVRRRRRCEAC). The 91-residue stretch at 49 to 139 (PAIVKKNGSR…VYRSFEDVAE (91 aa)) folds into the ATP-cone domain.

The protein belongs to the NrdR family. The cofactor is Zn(2+).

Its function is as follows. Negatively regulates transcription of bacterial ribonucleotide reductase nrd genes and operons by binding to NrdR-boxes. The protein is Transcriptional repressor NrdR of Cupriavidus pinatubonensis (strain JMP 134 / LMG 1197) (Cupriavidus necator (strain JMP 134)).